The primary structure comprises 237 residues: MSAKQNGFTFKQFHIDHHRCAMKVGTDGILLGAWADVSQSERILDLGTGTGLIALMLAQRSTKESEIHAVELDQAAYLQAQANVHASPWAQRVHVYQQDAAEFCRNAVNKFDLIVANPPYFPQGVDCATPQRDLARYTATHRHVDWLNWASHCLSEQGKISMVLPFEAGETLLKQTALYCIARCEVITKKGKAPQRLLLTFSLQAQPLQPSQLIIYDESNRYHPDFIGLTKDFYLAF.

It belongs to the methyltransferase superfamily. tRNA (adenine-N(6)-)-methyltransferase family.

It is found in the cytoplasm. It catalyses the reaction adenosine(37) in tRNA1(Val) + S-adenosyl-L-methionine = N(6)-methyladenosine(37) in tRNA1(Val) + S-adenosyl-L-homocysteine + H(+). In terms of biological role, specifically methylates the adenine in position 37 of tRNA(1)(Val) (anticodon cmo5UAC). The chain is tRNA1(Val) (adenine(37)-N6)-methyltransferase from Pasteurella multocida (strain Pm70).